The chain runs to 207 residues: Serotype 2 fimbrial subunit (207 aa).

The first 26 residues, M1–A26, serve as a signal peptide directing secretion. C42 and C85 are joined by a disulfide.

Belongs to the fimbrial protein family.

The protein localises to the fimbrium. Bordetella pertussis is the causative agent of whooping cough. An essential step in the disease process is the attachment of the bacteria to the ciliated epithelium of the respiratory tract, enabling the organism to resist normal host-clearance mechanisms. It is unclear which bacterial cell surface component are responsible for adherence but the fimbriae of B.pertussis are prime candidates for being involved in this process. In Bordetella pertussis (strain Tohama I / ATCC BAA-589 / NCTC 13251), this protein is Serotype 2 fimbrial subunit (fim2).